The following is a 395-amino-acid chain: Choline/ethanolamine kinase (395 aa).

Ala-2 bears the N-acetylalanine mark. Residues 75 to 81 (SGGLSNL), Arg-104, 146 to 152 (QYIPSRP), Gln-244, and Asp-264 each bind ATP. Residue 77–79 (GLS) participates in phosphocholine binding.

The protein belongs to the choline/ethanolamine kinase family. As to quaternary structure, homodimer, and heterodimer with CHKA.

It catalyses the reaction choline + ATP = phosphocholine + ADP + H(+). It carries out the reaction ethanolamine + ATP = phosphoethanolamine + ADP + H(+). The protein operates within phospholipid metabolism; phosphatidylethanolamine biosynthesis; phosphatidylethanolamine from ethanolamine: step 1/3. Has a key role in phospholipid metabolism, and catalyzes the first step of phosphatidylethanolamine and phosphatidylcholine biosynthesis. The protein is Choline/ethanolamine kinase (CHKB) of Homo sapiens (Human).